The following is a 259-amino-acid chain: HTH-type transcriptional regulator Rv1931c (259 aa).

Positions 104–121 (SHRRHRPRAGTGRRRPRH) are enriched in basic residues. Residues 104 to 170 (SHRRHRPRAG…GAGGHRGRAG (67 aa)) are disordered. Residues 174-257 (RIGELAQRAA…GISPDQYRKA (84 aa)) form the HTH araC/xylS-type domain. DNA-binding regions (H-T-H motif) lie at residues 176–197 (GELA…SDEV) and 224–247 (VVAI…IRRV).

Functionally, controls the expression of genes important for virulence. This is HTH-type transcriptional regulator Rv1931c from Mycobacterium tuberculosis (strain ATCC 25618 / H37Rv).